Here is a 31-residue protein sequence, read N- to C-terminus: Cliotide T10 (31 aa).

The segment at residues 1 to 31 is a cross-link (cyclopeptide (Gly-Asn)); that stretch reads GIPCGESCVYIPCTVTALLGCSCKDKVCYKN. 3 cysteine pairs are disulfide-bonded: C4/C21, C8/C23, and C13/C28.

In terms of processing, contains 3 disulfide bonds. This is a cyclic peptide. Expressed in seed, root and nodule but not in flower, stem, shoot, leaf and pod (at protein level).

Its function is as follows. Probably participates in a plant defense mechanism. The polypeptide is Cliotide T10 (Clitoria ternatea (Butterfly pea)).